Reading from the N-terminus, the 129-residue chain is ATP synthase epsilon chain (129 aa).

It belongs to the ATPase epsilon chain family. F-type ATPases have 2 components, CF(1) - the catalytic core - and CF(0) - the membrane proton channel. CF(1) has five subunits: alpha(3), beta(3), gamma(1), delta(1), epsilon(1). CF(0) has three main subunits: a, b and c.

The protein localises to the cell inner membrane. Produces ATP from ADP in the presence of a proton gradient across the membrane. The polypeptide is ATP synthase epsilon chain (Campylobacter curvus (strain 525.92)).